The primary structure comprises 165 residues: Putative ankyrin repeat domain-containing protein 20A5 (165 aa).

ANK repeat units lie at residues 66 to 95, 99 to 128, and 132 to 161; these read QHRT…QIDI, ENRT…NPNL, and YGNT…NIEA.

The polypeptide is Putative ankyrin repeat domain-containing protein 20A5 (ANKRD20A5P) (Homo sapiens (Human)).